The following is a 208-amino-acid chain: Ribosomal RNA small subunit methyltransferase G (208 aa).

S-adenosyl-L-methionine-binding positions include Gly-78, Phe-83, Glu-101 to Ser-103, Ile-129 to Glu-130, and Arg-142.

It belongs to the methyltransferase superfamily. RNA methyltransferase RsmG family.

It localises to the cytoplasm. In terms of biological role, specifically methylates the N7 position of a guanine in 16S rRNA. This chain is Ribosomal RNA small subunit methyltransferase G, found in Borrelia garinii subsp. bavariensis (strain ATCC BAA-2496 / DSM 23469 / PBi) (Borreliella bavariensis).